A 59-amino-acid polypeptide reads, in one-letter code: Small ribosomal subunit protein bS21 (59 aa).

The disordered stretch occupies residues 39-59 (ETPVEKYKRKQRLKNRTKRRR). The segment covering 45–59 (YKRKQRLKNRTKRRR) has biased composition (basic residues).

This sequence belongs to the bacterial ribosomal protein bS21 family.

The sequence is that of Small ribosomal subunit protein bS21 from Prochlorococcus marinus (strain SARG / CCMP1375 / SS120).